We begin with the raw amino-acid sequence, 905 residues long: Protein translocase subunit SecA (905 aa).

Residues Gln87, 105 to 109 (GEGKT), and Asp512 contribute to the ATP site. The tract at residues 565-584 (RRIDNQLRGRSGRQGDPGSS) is disordered. Residues Cys886, Cys888, Cys897, and His898 each contribute to the Zn(2+) site.

The protein belongs to the SecA family. As to quaternary structure, monomer and homodimer. Part of the essential Sec protein translocation apparatus which comprises SecA, SecYEG and auxiliary proteins SecDF-YajC and YidC. It depends on Zn(2+) as a cofactor.

The protein localises to the cell inner membrane. It is found in the cytoplasm. It catalyses the reaction ATP + H2O + cellular proteinSide 1 = ADP + phosphate + cellular proteinSide 2.. Part of the Sec protein translocase complex. Interacts with the SecYEG preprotein conducting channel. Has a central role in coupling the hydrolysis of ATP to the transfer of proteins into and across the cell membrane, serving both as a receptor for the preprotein-SecB complex and as an ATP-driven molecular motor driving the stepwise translocation of polypeptide chains across the membrane. This Haemophilus ducreyi (strain 35000HP / ATCC 700724) protein is Protein translocase subunit SecA.